We begin with the raw amino-acid sequence, 63 residues long: Large ribosomal subunit protein uL29 (63 aa).

It belongs to the universal ribosomal protein uL29 family.

In Alteromonas mediterranea (strain DSM 17117 / CIP 110805 / LMG 28347 / Deep ecotype), this protein is Large ribosomal subunit protein uL29.